The sequence spans 1489 residues: Type-2 histone deacetylase 1 (1489 aa).

Low complexity-rich tracts occupy residues 135–163, 190–259, 281–306, and 325–399; these read NNNNINNNNNSNGSNSSNNSHNGGSSPSG, SNGN…SRNL, NIINNNSNNNTNNNNNIMNGTTTSTT, and SPTS…NINN. 5 disordered regions span residues 135-259, 281-556, 915-935, 955-1024, and 1151-1185; these read NNNN…SRNL, NIIN…NYQQ, NNNNNNNNNNNNNNNEEDDQL, NISK…RDRD, and STGINQFSTSTPITTTGTATVTPGSTTSSTNGEQC. The span at 400 to 430 shows a compositional bias: polar residues; it reads VANGTPRPSLQTSRLQGKLPSPQQYNTSPSH. 4 stretches are compositionally biased toward low complexity: residues 431–450, 486–553, 915–928, and 959–988; these read QQYPSPKNNNNSNNIIPIQS, NNNN…NNSN, NNNNNNNNNNNNNN, and NNNNNNNNNNNNNNNNNNNNNNNNNNNNNN. 2 stretches are compositionally biased toward basic and acidic residues: residues 989–1001 and 1010–1024; these read RNRDRDREFERDN and IEKERNRNNRIRDRD. A compositionally biased stretch (low complexity) spans 1158–1180; that stretch reads STSTPITTTGTATVTPGSTTSST. Residue His1232 is the Proton acceptor of the active site. Over residues 1325-1335 the composition is skewed to acidic residues; the sequence is EQNDYDDDDNN. Residues 1325-1374 are disordered; that stretch reads EQNDYDDDDNNNDVNNNNNNNNNNNNNNNNNNNNKNNNNNNSNSITQQST. The segment covering 1336–1367 has biased composition (low complexity); that stretch reads NDVNNNNNNNNNNNNNNNNNNNNKNNNNNNSN.

This sequence belongs to the histone deacetylase family. HD type 2 subfamily.

It is found in the nucleus. The protein localises to the cytoplasm. It carries out the reaction N(6)-acetyl-L-lysyl-[histone] + H2O = L-lysyl-[histone] + acetate. Functionally, responsible for the deacetylation of lysine residues on the N-terminal part of the core histones (H2A, H2B, H3 and H4). Histone deacetylation plays an important role in transcriptional regulation, cell cycle progression and developmental events. Histone deacetylases act via the formation of large multiprotein complexes. In Dictyostelium discoideum (Social amoeba), this protein is Type-2 histone deacetylase 1 (hdaD).